Reading from the N-terminus, the 116-residue chain is UPF0298 protein EF_2453 (116 aa).

It belongs to the UPF0298 family.

The protein resides in the cytoplasm. The polypeptide is UPF0298 protein EF_2453 (Enterococcus faecalis (strain ATCC 700802 / V583)).